The sequence spans 284 residues: MKQKVVSIGDINVANDLPFVLFGGMNVLESRDLAMRICEHYLTVTQKLGIPYVFKASFDKANRSSIHSYRGPGLEEGMKIFQELKQTFGVKIITDVHEPSQAQPVADVVDVIQLPAFLARQTDLVEAMAKTGAVINVKKPQFVSPGQMGNIVDKFKEGGNEKVILCDRGANFGYDNLVVDMLGFSIMKKVSGNSPVIFDVTHALQCRDPFGAPSGGRRAQVAELARAGMAVGLAGLFIEAHPDPEHAKCDGPSALPLAKLEPFLKQMKAIDDLVKGFEELDTSK.

The protein belongs to the KdsA family.

It localises to the cytoplasm. The catalysed reaction is D-arabinose 5-phosphate + phosphoenolpyruvate + H2O = 3-deoxy-alpha-D-manno-2-octulosonate-8-phosphate + phosphate. It participates in carbohydrate biosynthesis; 3-deoxy-D-manno-octulosonate biosynthesis; 3-deoxy-D-manno-octulosonate from D-ribulose 5-phosphate: step 2/3. It functions in the pathway bacterial outer membrane biogenesis; lipopolysaccharide biosynthesis. The protein is 2-dehydro-3-deoxyphosphooctonate aldolase of Escherichia coli O6:K15:H31 (strain 536 / UPEC).